A 254-amino-acid chain; its full sequence is uncharacterized protein (254 aa).

This sequence belongs to the methyltransferase superfamily.

This is an uncharacterized protein from Mycobacterium bovis (strain ATCC BAA-935 / AF2122/97).